We begin with the raw amino-acid sequence, 319 residues long: tRNA dimethylallyltransferase (319 aa).

Residue 16–23 (GPTASGKS) participates in ATP binding. 18–23 (TASGKS) contacts substrate. The tract at residues 46–49 (DSMV) is interaction with substrate tRNA.

This sequence belongs to the IPP transferase family. As to quaternary structure, monomer. Requires Mg(2+) as cofactor.

The enzyme catalyses adenosine(37) in tRNA + dimethylallyl diphosphate = N(6)-dimethylallyladenosine(37) in tRNA + diphosphate. In terms of biological role, catalyzes the transfer of a dimethylallyl group onto the adenine at position 37 in tRNAs that read codons beginning with uridine, leading to the formation of N6-(dimethylallyl)adenosine (i(6)A). This Cutibacterium acnes (strain DSM 16379 / KPA171202) (Propionibacterium acnes) protein is tRNA dimethylallyltransferase.